Here is a 151-residue protein sequence, read N- to C-terminus: Transcriptional repressor NrdR (151 aa).

The segment at 3–34 is a zinc-finger region; that stretch reads CPFCGYSESKVVDSRSTEDNMAIRRRRECLEC. Residues 49 to 139 form the ATP-cone domain; that stretch reads ILVIKKDSSR…VYRQFKDINT (91 aa).

This sequence belongs to the NrdR family. Zn(2+) is required as a cofactor.

Functionally, negatively regulates transcription of bacterial ribonucleotide reductase nrd genes and operons by binding to NrdR-boxes. The chain is Transcriptional repressor NrdR from Clostridium acetobutylicum (strain ATCC 824 / DSM 792 / JCM 1419 / IAM 19013 / LMG 5710 / NBRC 13948 / NRRL B-527 / VKM B-1787 / 2291 / W).